The sequence spans 259 residues: Ferritin-3, chloroplastic (259 aa).

Residues 1 to 49 (MLLKAASTFSLLNIHGEKKDISPLFSSSSSISSPVSSGKSGNLSFPLRA) constitute a chloroplast transit peptide. The extension peptide (EP) stretch occupies residues 50 to 88 (SKSSTTTTSTLSGVVFEPFEEVKKEMDLVPSGQQLSLAR). The 154-residue stretch at 89 to 242 (HLYSPECEAA…EYVSQLRRLG (154 aa)) folds into the Ferritin-like diiron domain. Fe cation-binding residues include Glu106, Glu141, His144, Glu190, and Gln224.

This sequence belongs to the ferritin family. Oligomer of 24 subunits. There are two types of subunits: L (light) chain and H (heavy) chain. The major chain can be light or heavy, depending on the species and tissue type. The functional molecule forms a roughly spherical shell with a diameter of 12 nm and contains a central cavity into which the insoluble mineral iron core is deposited.

The protein resides in the plastid. It localises to the chloroplast. It catalyses the reaction 4 Fe(2+) + O2 + 4 H(+) = 4 Fe(3+) + 2 H2O. Stores iron in a soluble, non-toxic, readily available form. Important for iron homeostasis. Has ferroxidase activity. Iron is taken up in the ferrous form and deposited as ferric hydroxides after oxidation. The protein is Ferritin-3, chloroplastic (FER3) of Arabidopsis thaliana (Mouse-ear cress).